A 363-amino-acid polypeptide reads, in one-letter code: Copper-containing nitrite reductase (363 aa).

The first 24 residues, 1–24 (MSVFRSVLGACVLLGSCASSLALA), serve as a signal peptide directing secretion. 2 Plastocyanin-like domains span residues 25–193 (GGAE…YDRV) and 194–363 (YTIG…EPKQ). Histidine 113, histidine 118, histidine 153, cysteine 154, histidine 163, methionine 168, and histidine 324 together coordinate Cu cation.

This sequence belongs to the multicopper oxidase family. As to quaternary structure, homotrimer. Cu(2+) is required as a cofactor. Requires Cu(+) as cofactor. The cofactor is FAD.

It localises to the periplasm. The catalysed reaction is nitric oxide + Fe(III)-[cytochrome c] + H2O = Fe(II)-[cytochrome c] + nitrite + 2 H(+). It functions in the pathway nitrogen metabolism; nitrate reduction (denitrification); dinitrogen from nitrate: step 2/4. The protein is Copper-containing nitrite reductase (nirK) of Pseudomonas chlororaphis (Pseudomonas aureofaciens).